The primary structure comprises 236 residues: Leucyl/phenylalanyl-tRNA--protein transferase (236 aa).

This sequence belongs to the L/F-transferase family.

The protein localises to the cytoplasm. It carries out the reaction N-terminal L-lysyl-[protein] + L-leucyl-tRNA(Leu) = N-terminal L-leucyl-L-lysyl-[protein] + tRNA(Leu) + H(+). It catalyses the reaction N-terminal L-arginyl-[protein] + L-leucyl-tRNA(Leu) = N-terminal L-leucyl-L-arginyl-[protein] + tRNA(Leu) + H(+). The catalysed reaction is L-phenylalanyl-tRNA(Phe) + an N-terminal L-alpha-aminoacyl-[protein] = an N-terminal L-phenylalanyl-L-alpha-aminoacyl-[protein] + tRNA(Phe). Its function is as follows. Functions in the N-end rule pathway of protein degradation where it conjugates Leu, Phe and, less efficiently, Met from aminoacyl-tRNAs to the N-termini of proteins containing an N-terminal arginine or lysine. This Shewanella halifaxensis (strain HAW-EB4) protein is Leucyl/phenylalanyl-tRNA--protein transferase.